A 123-amino-acid chain; its full sequence is Small ribosomal subunit protein uS12 (123 aa).

Residues 1–28 (MPTIQQLIRKPREPKRVRSKSQHLESCP) are disordered. 3-methylthioaspartic acid is present on D89.

The protein belongs to the universal ribosomal protein uS12 family. As to quaternary structure, part of the 30S ribosomal subunit. Contacts proteins S8 and S17. May interact with IF1 in the 30S initiation complex.

With S4 and S5 plays an important role in translational accuracy. Its function is as follows. Interacts with and stabilizes bases of the 16S rRNA that are involved in tRNA selection in the A site and with the mRNA backbone. Located at the interface of the 30S and 50S subunits, it traverses the body of the 30S subunit contacting proteins on the other side and probably holding the rRNA structure together. The combined cluster of proteins S8, S12 and S17 appears to hold together the shoulder and platform of the 30S subunit. The chain is Small ribosomal subunit protein uS12 from Cereibacter sphaeroides (strain ATCC 17029 / ATH 2.4.9) (Rhodobacter sphaeroides).